Reading from the N-terminus, the 108-residue chain is Large ribosomal subunit protein bL31B (108 aa).

The interval 85–108 is disordered; it reads PKPETSVEEVLPKGKKKAPAKKKK. The span at 97 to 108 shows a compositional bias: basic residues; it reads KGKKKAPAKKKK.

Belongs to the bacterial ribosomal protein bL31 family. Type B subfamily. In terms of assembly, part of the 50S ribosomal subunit.

The protein is Large ribosomal subunit protein bL31B of Chlamydia muridarum (strain MoPn / Nigg).